We begin with the raw amino-acid sequence, 610 residues long: Sensor protein kinase WalK (610 aa).

2 helical membrane-spanning segments follow: residues 14–34 (LVIV…LYFT) and 184–204 (IFIV…FFIA). Positions 205–257 (RTITKPITDMRNQTVEMSKGNYTQRVKIYGNDEIGELALAFNNLSKRVQEAQA) constitute an HAMP domain. Positions 262-333 (EKRRLDSVIT…IQENNDSFLL (72 aa)) constitute a PAS domain. The PAC domain maps to 326–379 (ENNDSFLLDINENEGIIARVNFSTIVQETGFVTGYIAVLHDVTEQQQVERERRE). The Histidine kinase domain maps to 383–601 (NVSHELRTPL…SIFITLPCEV (219 aa)). A Phosphohistidine; by autocatalysis modification is found at H386.

In terms of processing, autophosphorylated.

The protein resides in the cell membrane. The enzyme catalyses ATP + protein L-histidine = ADP + protein N-phospho-L-histidine.. In terms of biological role, member of the two-component regulatory system WalK/WalR. WalK functions as a sensor protein kinase which is autophosphorylated at a histidine residue and transfers its phosphate group to WalR. This Staphylococcus saprophyticus subsp. saprophyticus (strain ATCC 15305 / DSM 20229 / NCIMB 8711 / NCTC 7292 / S-41) protein is Sensor protein kinase WalK (walK).